Consider the following 262-residue polypeptide: Global transcriptional regulator CodY (262 aa).

The GAF domain stretch occupies residues M1–S159. Positions A207–R226 form a DNA-binding region, H-T-H motif.

Belongs to the CodY family.

The protein localises to the cytoplasm. In terms of biological role, DNA-binding global transcriptional regulator which is involved in the adaptive response to starvation and acts by directly or indirectly controlling the expression of numerous genes in response to nutrient availability. During rapid exponential growth, CodY is highly active and represses genes whose products allow adaptation to nutrient depletion. The chain is Global transcriptional regulator CodY from Lactococcus lactis subsp. cremoris (strain SK11).